A 1561-amino-acid polypeptide reads, in one-letter code: Formin-E (1561 aa).

A compositionally biased stretch (low complexity) spans 1–28 (MDNHSSSSNPSSLSSSSSSSSSSSSFLS). Disordered stretches follow at residues 1-63 (MDNH…EEKP), 77-187 (EEEE…GKLS), 211-279 (PIIV…SSED), and 305-365 (ILRS…NLNY). Over residues 29-51 (DHVKKEEQNGLDTIKEEIENKIE) the composition is skewed to basic and acidic residues. A coiled-coil region spans residues 32-85 (KKEEQNGLDTIKEEIENKIENEEEEEKIEEKPIEKVEEEKIIVQKEEEEKIEEE). A compositionally biased stretch (acidic residues) spans 80–89 (EKIEEEPIEK). Over residues 103–120 (DNINTTVEAKTLETSTEP) the composition is skewed to polar residues. A coiled-coil region spans residues 158–208 (EQQEQQEKQKEETKPSIREEVKEKIKGKLSEIKEEIKDIKEEIKHVIREEV). The segment covering 162 to 187 (QQEKQKEETKPSIREEVKEKIKGKLS) has biased composition (basic and acidic residues). The span at 220–229 (SPPPPPPPPS) shows a compositional bias: pro residues. A compositionally biased stretch (low complexity) spans 230–258 (ITVQSSSPVSSQISSPVSSPVSSPKPSVT). The segment covering 305 to 320 (ILRSKSSPNPGANNPN) has biased composition (polar residues). The span at 326-365 (NNSSSSSSSNNNSDNNNNSDNNSNNNNINNNNSSSNNLNY) shows a compositional bias: low complexity. The segment at 379 to 427 (YHDFKIHRGTSSCVYCGENTRLWSTSYKCFFCGVVCHKKCLDSMNTIPC) adopts a Phorbol-ester/DAG-type zinc-finger fold. A compositionally biased stretch (low complexity) spans 465–534 (PSSITNSSSK…TSISSPPIAS (70 aa)). Positions 465-549 (PSSITNSSSK…PLLQQQQQQQ (85 aa)) are disordered. Positions 541 to 573 (LLQQQQQQQQQQQQQQQQQQQQQQQQQQISTTQ) form a coiled coil. Residues 581–929 (SEKPDDDMIN…QISLHKGGFE (349 aa)) form the GBD/FH3 domain. Residues 952–989 (LNRKLGELEKQNIDKAMKIQEQDINIKSLLDLLKQLKD) are a coiled coil. Disordered regions lie at residues 1009 to 1092 (MEPP…VPKP), 1466 to 1508 (EEKR…SDED), and 1526 to 1561 (RQAK…PNKN). Positions 1017–1033 (SVKSPDDPNNAAPIVVA) are enriched in low complexity. The region spanning 1019-1081 (KSPDDPNNAA…LGAKKPPAGV (63 aa)) is the FH1 domain. A compositionally biased stretch (pro residues) spans 1034 to 1070 (PIPPPPPPISGAPPPPPPPPPPMKGGAGPPPPPPPPG). The segment covering 1071–1081 (KLGAKKPPAGV) has biased composition (low complexity). Residues 1086–1475 (PPKVPKPSHP…EEKRLQQKQQ (390 aa)) enclose the FH2 domain. Positions 1398–1491 (LATASTEVEK…RKLTTSNESA (94 aa)) form a coiled coil. The span at 1466–1481 (EEKRLQQKQQRQERAV) shows a compositional bias: basic and acidic residues. Composition is skewed to polar residues over residues 1484-1498 (LTTS…PNHA) and 1536-1561 (HQIA…PNKN). Residues 1488-1518 (NESASASPNHAKSTDDKSDEDDDIVNDLLMA) enclose the DAD domain.

This sequence belongs to the formin homology family. Diaphanous subfamily. Interacts (via GBD/FH3 domain) with activated Rho-GTPases.

Its function is as follows. Formins play an important role in the nucleation of actin and the formation of linear actin filaments. This Dictyostelium discoideum (Social amoeba) protein is Formin-E (forE).